The chain runs to 340 residues: Ketol-acid reductoisomerase (NADP(+)) (340 aa).

The KARI N-terminal Rossmann domain occupies V3 to T182. NADP(+)-binding positions include Y26 to Q29, R49, S53, and D83 to Q86. Residue H108 is part of the active site. G134 contacts NADP(+). The 146-residue stretch at T183–V328 folds into the KARI C-terminal knotted domain. Mg(2+) contacts are provided by D191, E195, E227, and E231. Residue S252 participates in substrate binding.

Belongs to the ketol-acid reductoisomerase family. The cofactor is Mg(2+).

The enzyme catalyses (2R)-2,3-dihydroxy-3-methylbutanoate + NADP(+) = (2S)-2-acetolactate + NADPH + H(+). It catalyses the reaction (2R,3R)-2,3-dihydroxy-3-methylpentanoate + NADP(+) = (S)-2-ethyl-2-hydroxy-3-oxobutanoate + NADPH + H(+). The protein operates within amino-acid biosynthesis; L-isoleucine biosynthesis; L-isoleucine from 2-oxobutanoate: step 2/4. It functions in the pathway amino-acid biosynthesis; L-valine biosynthesis; L-valine from pyruvate: step 2/4. Functionally, involved in the biosynthesis of branched-chain amino acids (BCAA). Catalyzes an alkyl-migration followed by a ketol-acid reduction of (S)-2-acetolactate (S2AL) to yield (R)-2,3-dihydroxy-isovalerate. In the isomerase reaction, S2AL is rearranged via a Mg-dependent methyl migration to produce 3-hydroxy-3-methyl-2-ketobutyrate (HMKB). In the reductase reaction, this 2-ketoacid undergoes a metal-dependent reduction by NADPH to yield (R)-2,3-dihydroxy-isovalerate. The protein is Ketol-acid reductoisomerase (NADP(+)) of Streptococcus gordonii (strain Challis / ATCC 35105 / BCRC 15272 / CH1 / DL1 / V288).